Here is a 553-residue protein sequence, read N- to C-terminus: CTP synthase (553 aa).

Residues Met-1–Leu-270 are amidoligase domain. Ser-13 contacts CTP. Position 13 (Ser-13) interacts with UTP. ATP contacts are provided by residues Ser-14 to Ile-19 and Asp-71. Mg(2+)-binding residues include Asp-71 and Glu-144. Residues Asp-151 to Glu-153, Lys-191 to Gln-196, and Lys-227 contribute to the CTP site. UTP-binding positions include Lys-191–Gln-196 and Lys-227. A Glutamine amidotransferase type-1 domain is found at Thr-295–Thr-547. Gly-356 lines the L-glutamine pocket. The Nucleophile; for glutamine hydrolysis role is filled by Cys-383. Residues Leu-384–Gln-387, Glu-407, and Arg-473 contribute to the L-glutamine site. Active-site residues include His-520 and Glu-522.

It belongs to the CTP synthase family. As to quaternary structure, homotetramer.

The catalysed reaction is UTP + L-glutamine + ATP + H2O = CTP + L-glutamate + ADP + phosphate + 2 H(+). It carries out the reaction L-glutamine + H2O = L-glutamate + NH4(+). It catalyses the reaction UTP + NH4(+) + ATP = CTP + ADP + phosphate + 2 H(+). The protein operates within pyrimidine metabolism; CTP biosynthesis via de novo pathway; CTP from UDP: step 2/2. Its activity is regulated as follows. Allosterically activated by GTP, when glutamine is the substrate; GTP has no effect on the reaction when ammonia is the substrate. The allosteric effector GTP functions by stabilizing the protein conformation that binds the tetrahedral intermediate(s) formed during glutamine hydrolysis. Inhibited by the product CTP, via allosteric rather than competitive inhibition. In terms of biological role, catalyzes the ATP-dependent amination of UTP to CTP with either L-glutamine or ammonia as the source of nitrogen. Regulates intracellular CTP levels through interactions with the four ribonucleotide triphosphates. This Burkholderia mallei (strain NCTC 10229) protein is CTP synthase.